The following is a 300-amino-acid chain: Transcription factor E2F5 (300 aa).

Residues 2-73 (GSSRHEKSLG…KNSIQWKGVG (72 aa)) mediate DNA binding. Residues 31–53 (LKAAADTLAVRQKRRIYDITNVL) are leucine-zipper. The DEF box motif lies at 36–73 (DTLAVRQKRRIYDITNVLEGIDLIEKKSKNSIQWKGVG). Residues 74–170 (AGCNTKEVID…GQNGQKKYQI (97 aa)) form a dimerization region. Residues 191-250 (SKPVVFPVPPPDDLTQPSSQSSTSVTPPKSTMAAQNLPEQHVSERSQNFQQTPATEISSG) form a disordered region. Positions 203–221 (DLTQPSSQSSTSVTPPKST) are enriched in low complexity. Residues 235-246 (RSQNFQQTPATE) are compositionally biased toward polar residues. The tract at residues 242–300 (TPATEISSGSISGDIIDELMSSDVFPLLRLSPTPADDYNFNLDDNEGVCDLFDVQILNY) is transactivation. The RBL2 association stretch occupies residues 277 to 294 (DDYNFNLDDNEGVCDLFD).

The protein belongs to the E2F/DP family. As to quaternary structure, component of the DRTF1/E2F transcription factor complex. Binds cooperatively with DP-1 to E2F sites. Interaction with retinoblastoma protein RB1 or proteins RBL1 and RBL2 inhibits the E2F transactivation domain. Component of the DREAM complex (also named LINC complex) at least composed of E2F4, E2F5, LIN9, LIN37, LIN52, LIN54, MYBL1, MYBL2, RBL1, RBL2, RBBP4, TFDP1 and TFDP2. The complex exists in quiescent cells where it represses cell cycle-dependent genes. It dissociates in S phase when LIN9, LIN37, LIN52 and LIN54 form a subcomplex that binds to MYBL2. Found in placenta followed by kidney, lung and brain.

It localises to the nucleus. Transcriptional activator that binds to E2F sites, these sites are present in the promoter of many genes whose products are involved in cell proliferation. May mediate growth factor-initiated signal transduction. It is likely involved in the early responses of resting cells to growth factor stimulation. Specifically required for multiciliate cell differentiation: together with MCIDAS and E2F5, binds and activate genes required for centriole biogenesis. The protein is Transcription factor E2F5 (E2f5) of Rattus norvegicus (Rat).